The following is a 380-amino-acid chain: Cytochrome b (380 aa).

A run of 4 helical transmembrane segments spans residues 34–54 (FGSL…LLAM), 78–99 (WLIR…YLHI), 114–134 (WNTG…GYVL), and 179–199 (FFAL…IHLT). Residues His84 and His98 each contribute to the heme b site. Heme b contacts are provided by His183 and His197. Position 202 (His202) interacts with a ubiquinone. Transmembrane regions (helical) follow at residues 227–247 (LKDL…ALFT), 289–309 (LGGV…PFLH), 321–341 (LSQL…WVGS), and 348–368 (FIII…VLLP).

This sequence belongs to the cytochrome b family. The cytochrome bc1 complex contains 11 subunits: 3 respiratory subunits (MT-CYB, CYC1 and UQCRFS1), 2 core proteins (UQCRC1 and UQCRC2) and 6 low-molecular weight proteins (UQCRH/QCR6, UQCRB/QCR7, UQCRQ/QCR8, UQCR10/QCR9, UQCR11/QCR10 and a cleavage product of UQCRFS1). This cytochrome bc1 complex then forms a dimer. Heme b is required as a cofactor.

The protein localises to the mitochondrion inner membrane. Its function is as follows. Component of the ubiquinol-cytochrome c reductase complex (complex III or cytochrome b-c1 complex) that is part of the mitochondrial respiratory chain. The b-c1 complex mediates electron transfer from ubiquinol to cytochrome c. Contributes to the generation of a proton gradient across the mitochondrial membrane that is then used for ATP synthesis. This chain is Cytochrome b (MT-CYB), found in Herpetotheres cachinnans (Laughing falcon).